The sequence spans 176 residues: Ribosome maturation factor RimM (176 aa).

The PRC barrel domain maps to 102-175; it reads KNDYYWNDII…TDKKFILVQW (74 aa).

The protein belongs to the RimM family. As to quaternary structure, binds ribosomal protein uS19.

The protein resides in the cytoplasm. Functionally, an accessory protein needed during the final step in the assembly of 30S ribosomal subunit, possibly for assembly of the head region. Essential for efficient processing of 16S rRNA. May be needed both before and after RbfA during the maturation of 16S rRNA. It has affinity for free ribosomal 30S subunits but not for 70S ribosomes. The polypeptide is Ribosome maturation factor RimM (Buchnera aphidicola subsp. Acyrthosiphon pisum (strain APS) (Acyrthosiphon pisum symbiotic bacterium)).